The primary structure comprises 400 residues: Nucleoside permease NupC (400 aa).

Over 1-3 (MDR) the chain is Cytoplasmic. Residues 4 to 24 (VLHFVLALAVVAILALLVSSD) traverse the membrane as a helical segment. The Periplasmic segment spans residues 25-36 (RKKIRIRYVIQL). Residues 37–57 (LVIEVLLAWFFLNSDVGLGFV) form a helical membrane-spanning segment. Over 58–86 (KGFSEMFEKLLGFANEGTNFVFGSMNDQG) the chain is Cytoplasmic. The helical transmembrane segment at 87–107 (LAFFFLKVLCPIVFISALIGI) threads the bilayer. At 108–168 (LQHIRVLPVI…GKISRNRMYT (61 aa)) the chain is on the periplasmic side. The chain crosses the membrane as a helical span at residues 169–189 (MAATAMSTVSMSIVGAYMTML). Over 190–192 (EPK) the chain is Cytoplasmic. A helical membrane pass occupies residues 193-213 (YVVAALVLNMFSTFIVLSLIN). Residues 214–250 (PYRVDASEENIQMSNLHEGQSFFEMLGEYILAGFKVA) lie on the Periplasmic side of the membrane. A helical transmembrane segment spans residues 251–271 (IIVAAMLIGFIALIAALNALF). Residues 272 to 281 (ATVTGWFGYS) are Cytoplasmic-facing. Residues 282 to 302 (ISFQGILGYIFYPIAWVMGVP) traverse the membrane as a helical segment. Over 303-341 (SSEALQVGSIMATKLVSNEFVAMMDLQKIASTLSPRAEG) the chain is Periplasmic. Residues 342 to 362 (IISVFLVSFANFSSIGIIAGA) form a helical membrane-spanning segment. Over 363–378 (VKGLNEEQGNVVSRFG) the chain is Cytoplasmic. The helical transmembrane segment at 379–399 (LKLVYGSTLVSVLSASIAALV) threads the bilayer. Position 400 (Leu-400) is a topological domain, periplasmic.

This sequence belongs to the concentrative nucleoside transporter (CNT) (TC 2.A.41) family.

It localises to the cell inner membrane. It carries out the reaction adenosine(in) + H(+)(in) = adenosine(out) + H(+)(out). The catalysed reaction is uridine(in) + H(+)(in) = uridine(out) + H(+)(out). It catalyses the reaction thymidine(in) + H(+)(in) = thymidine(out) + H(+)(out). The enzyme catalyses cytidine(in) + H(+)(in) = cytidine(out) + H(+)(out). It carries out the reaction 2'-deoxycytidine(in) + H(+)(in) = 2'-deoxycytidine(out) + H(+)(out). With respect to regulation, transport is inhibited by the proton uncoupler dinitrophenol. Inhibited by the nucleoside antibiotic showdomycin. In terms of biological role, nucleoside transport protein that can transport adenosine, uridine, thymidine, cytidine and deoxycytidine. Shows weak activity with inosine and xanthosine. Transport is driven by a proton motive force. Does not transport guanosine, deoxyguanosine, hypoxanthine or uracil. Also shows activity with the chemotherapeutic drugs 3'-azido-3'-deoxythymidine (AZT), 2',3'- dideoxycytidine (ddC) and 2'-deoxy-2',2'-difluorocytidine (gemcitabine). The polypeptide is Nucleoside permease NupC (Escherichia coli (strain K12)).